The chain runs to 314 residues: uncharacterized protein (314 aa).

Residues 1 to 70 (MAGNSQRRGA…QGRHKKTDDT (70 aa)) form a disordered region. Residues 44 to 65 (RPHHPAGKRAAKAARQAQGRHK) are compositionally biased toward basic residues. The S-adenosyl-L-methionine site is built by Gly-265, Ile-285, and Leu-294.

Belongs to the class IV-like SAM-binding methyltransferase superfamily. RNA methyltransferase TrmH family.

This is an uncharacterized protein from Mycolicibacterium gilvum (strain PYR-GCK) (Mycobacterium gilvum (strain PYR-GCK)).